We begin with the raw amino-acid sequence, 226 residues long: PKHD-type hydroxylase PiuC (226 aa).

Residues 78 to 178 (KVFPPLFNCY…RYASFFWTQS (101 aa)) enclose the Fe2OG dioxygenase domain. Fe cation-binding residues include His96, Asp98, and His159. Arg169 contacts 2-oxoglutarate.

It depends on Fe(2+) as a cofactor. L-ascorbate serves as cofactor.

The protein is PKHD-type hydroxylase PiuC (piuC) of Pseudomonas aeruginosa (strain ATCC 15692 / DSM 22644 / CIP 104116 / JCM 14847 / LMG 12228 / 1C / PRS 101 / PAO1).